A 302-amino-acid polypeptide reads, in one-letter code: MSSALYESSITSLPLLGRGKVRENYAVGDDKLLMVTTDRLSAFDVILGQPIPDKGRVLAQMSDFWFRKLRHIVPTHETGIAPEAVVQPGEADQVRGRAIVVKRLKPILVEAVVRGYLAGSGWKDYQATGKVCGVQLAPGLRNAEKLPEPIFTPAAKADVGEHDENISFDEVERRIGPELAAQIRDVSIRLYKEASDFAATRGIIIADTKFEFGLDENGTLTLMDEALTADSSRFWPADSYQVGTNPPSFDKQFVRDWLEAVRIDGQPWPKTAPAPQLPADIIEKTADKYREALTRLTGETLR.

It belongs to the SAICAR synthetase family.

It carries out the reaction 5-amino-1-(5-phospho-D-ribosyl)imidazole-4-carboxylate + L-aspartate + ATP = (2S)-2-[5-amino-1-(5-phospho-beta-D-ribosyl)imidazole-4-carboxamido]succinate + ADP + phosphate + 2 H(+). The protein operates within purine metabolism; IMP biosynthesis via de novo pathway; 5-amino-1-(5-phospho-D-ribosyl)imidazole-4-carboxamide from 5-amino-1-(5-phospho-D-ribosyl)imidazole-4-carboxylate: step 1/2. The polypeptide is Phosphoribosylaminoimidazole-succinocarboxamide synthase (Ralstonia nicotianae (strain ATCC BAA-1114 / GMI1000) (Ralstonia solanacearum)).